The sequence spans 511 residues: Maturase K (511 aa).

The protein belongs to the intron maturase 2 family. MatK subfamily.

The protein resides in the plastid. It is found in the chloroplast. Its function is as follows. Usually encoded in the trnK tRNA gene intron. Probably assists in splicing its own and other chloroplast group II introns. This Paulownia tomentosa (Princess tree) protein is Maturase K.